Consider the following 601-residue polypeptide: Chaperone protein DnaK (601 aa).

Threonine 175 carries the post-translational modification Phosphothreonine; by autocatalysis. Residues 570–601 (FAQKAASKETSKNEQNEDGSIDAEIKEEDPKA) are disordered. Basic and acidic residues predominate over residues 575-584 (ASKETSKNEQ). Positions 585–601 (NEDGSIDAEIKEEDPKA) are enriched in acidic residues.

Belongs to the heat shock protein 70 family.

Functionally, acts as a chaperone. This Mycoplasma mobile (strain ATCC 43663 / 163K / NCTC 11711) (Mesomycoplasma mobile) protein is Chaperone protein DnaK.